The sequence spans 521 residues: uncharacterized protein (521 aa).

The segment at 1–25 (MLQRSLGVNGRKLAMSARSAKRERK) is disordered. A run of 6 helical transmembrane segments spans residues 68–88 (GAVWVLPTFGVAIGLGSGAVL), 114–134 (VLIVVSATMITTIGIVFSLTV), 160–180 (VVLAIFACTFAYSTGGLHTVG), 192–212 (VAVTGSLALAFVSIAALIYFL), 290–310 (ALLVTFVGDYVTAGGLLGWCW), and 399–419 (LLFWLPYPSFATYLHVGCAQI).

The protein resides in the cell membrane. This is an uncharacterized protein from Mycobacterium tuberculosis (strain CDC 1551 / Oshkosh).